A 326-amino-acid chain; its full sequence is uncharacterized protein (326 aa).

Glycine 28–threonine 35 contacts ATP.

This sequence belongs to the archaeal ATPase family.

This is an uncharacterized protein from Pyrococcus abyssi (strain GE5 / Orsay).